Reading from the N-terminus, the 175-residue chain is Large ribosomal subunit protein uL10 (175 aa).

Belongs to the universal ribosomal protein uL10 family. In terms of assembly, part of the ribosomal stalk of the 50S ribosomal subunit. The N-terminus interacts with L11 and the large rRNA to form the base of the stalk. The C-terminus forms an elongated spine to which L12 dimers bind in a sequential fashion forming a multimeric L10(L12)X complex.

In terms of biological role, forms part of the ribosomal stalk, playing a central role in the interaction of the ribosome with GTP-bound translation factors. This is Large ribosomal subunit protein uL10 from Prochlorococcus marinus (strain NATL1A).